Consider the following 433-residue polypeptide: Keratin, type I cytoskeletal 17 (433 aa).

The disordered stretch occupies residues 1 to 24 (MTTTIRQFTSSSSIKGSSGLGGGS). Residues 1 to 83 (MTTTIRQFTS…GGVDGLLAGG (83 aa)) form a head region. Phosphoserine occurs at positions 12 and 13. A Glycyl lysine isopeptide (Lys-Gly) (interchain with G-Cter in SUMO1); alternate cross-link involves residue K15. K15 participates in a covalent cross-link: Glycyl lysine isopeptide (Lys-Gly) (interchain with G-Cter in SUMO2); alternate. S25, S32, S34, and S39 each carry phosphoserine. The residue at position 44 (S44) is a Phosphoserine; by RPS6KA1. A coil 1A region spans residues 84–120 (EKATMQNLNDRLASYLDKVRALEEANTELEVKIRDWY). The IF rod domain maps to 84–395 (EKATMQNLND…RLLEGEDAHL (312 aa)). T110 carries the phosphothreonine modification. A linker 1 region spans residues 121 to 138 (QKQAPGPARDYSAYYHTI). Residues 139–230 (EDLKNKILVA…NHEEEMNALR (92 aa)) form a coil 1B region. The tract at residues 231-250 (GQVGGEINVEMDAAPGVDLS) is linker 12. The tract at residues 251 to 392 (RILSEMRDQY…TYRRLLEGED (142 aa)) is coil 2. K278 is covalently cross-linked (Glycyl lysine isopeptide (Lys-Gly) (interchain with G-Cter in SUMO2)). Residue T279 is modified to Phosphothreonine. Residue S323 is modified to Phosphoserine. The tract at residues 393–433 (AHLTQYKPKEPVTTRQVRTIVEEVQDGKVISSREQVHQTTR) is tail. Residues K399, K401, and K420 each participate in a glycyl lysine isopeptide (Lys-Gly) (interchain with G-Cter in SUMO1); alternate cross-link. Glycyl lysine isopeptide (Lys-Gly) (interchain with G-Cter in SUMO2); alternate cross-links involve residues K399, K401, and K420.

Belongs to the intermediate filament family. Heterodimer of a type I and a type II keratin. KRT17 associates with KRT6 isomers (KRT6A or KRT6B). Interacts with TRADD and SFN. In terms of processing, phosphorylation at Ser-44 occurs in a growth- and stress-dependent fashion in skin keratinocytes, it has no effect on filament organization. Expressed strongly in outer root sheath and medulla region of hair follicle and in the early differentiating epithelial cells (trichocytes) within the hair bulb region. Weak expression in the matrix cells of hair bulb. Also present in the sweat gland within the skin, vibrissae follicle, salivary gland, tooth and thymus.

Its subcellular location is the cytoplasm. Its function is as follows. Type I keratin involved in the formation and maintenance of various skin appendages, specifically in determining shape and orientation of hair. Required for the correct growth of hair follicles, in particular for the persistence of the anagen (growth) state. Modulates the function of TNF-alpha in the specific context of hair cycling. Regulates protein synthesis and epithelial cell growth through binding to the adapter protein SFN and by stimulating Akt/mTOR pathway. Involved in tissue repair. May be a marker of basal cell differentiation in complex epithelia and therefore indicative of a certain type of epithelial 'stem cells'. Acts as a promoter of epithelial proliferation by acting a regulator of immune response in skin: promotes Th1/Th17-dominated immune environment contributing to the development of basaloid skin tumors. May act as an autoantigen in the immunopathogenesis of psoriasis, with certain peptide regions being a major target for autoreactive T-cells and hence causing their proliferation. This Mus musculus (Mouse) protein is Keratin, type I cytoskeletal 17 (Krt17).